Here is a 245-residue protein sequence, read N- to C-terminus: Probable transcriptional regulatory protein CPR_1922 (245 aa).

It belongs to the TACO1 family.

Its subcellular location is the cytoplasm. In Clostridium perfringens (strain SM101 / Type A), this protein is Probable transcriptional regulatory protein CPR_1922.